The following is a 357-amino-acid chain: Membrane-bound lytic murein transglycosylase C (357 aa).

Positions 1–16 are cleaved as a signal peptide; it reads MKKLLALFVIAPILIS. A lipid anchor (N-palmitoyl cysteine) is attached at cysteine 17. Cysteine 17 carries S-diacylglycerol cysteine lipidation.

This sequence belongs to the transglycosylase Slt family.

It localises to the cell outer membrane. The enzyme catalyses Exolytic cleavage of the (1-&gt;4)-beta-glycosidic linkage between N-acetylmuramic acid (MurNAc) and N-acetylglucosamine (GlcNAc) residues in peptidoglycan, from either the reducing or the non-reducing ends of the peptidoglycan chains, with concomitant formation of a 1,6-anhydrobond in the MurNAc residue.. Murein-degrading enzyme. May play a role in recycling of muropeptides during cell elongation and/or cell division. The polypeptide is Membrane-bound lytic murein transglycosylase C (Photorhabdus laumondii subsp. laumondii (strain DSM 15139 / CIP 105565 / TT01) (Photorhabdus luminescens subsp. laumondii)).